The sequence spans 118 residues: V-type proton ATPase subunit G 1 (118 aa).

Alanine 2 carries the N-acetylalanine modification. The tract at residues alanine 25–arginine 90 is disordered. Residues glutamine 35–glutamine 56 are compositionally biased toward basic and acidic residues. 2 stretches are compositionally biased toward polar residues: residues serine 57 to leucine 69 and arginine 78 to glutamine 89.

This sequence belongs to the V-ATPase G subunit family. In terms of assembly, V-ATPase is a heteromultimeric enzyme made up of two complexes: the ATP-hydrolytic V1 complex and the proton translocation V0 complex. The V1 complex consists of three catalytic AB heterodimers that form a heterohexamer, three peripheral stalks each consisting of EG heterodimers, one central rotor including subunits D and F, and the regulatory subunits C and H. The proton translocation complex V0 consists of the proton transport subunit a, a ring of proteolipid subunits c9c'', rotary subunit d, subunits e and f, and the accessory subunits ATP6AP1/Ac45 and ATP6AP2/PRR.

The protein localises to the apical cell membrane. Its function is as follows. Subunit of the V1 complex of vacuolar(H+)-ATPase (V-ATPase), a multisubunit enzyme composed of a peripheral complex (V1) that hydrolyzes ATP and a membrane integral complex (V0) that translocates protons. V-ATPase is responsible for acidifying and maintaining the pH of intracellular compartments and in some cell types, is targeted to the plasma membrane, where it is responsible for acidifying the extracellular environment. In aerobic conditions, involved in intracellular iron homeostasis, thus triggering the activity of Fe(2+) prolyl hydroxylase (PHD) enzymes, and leading to HIF1A hydroxylation and subsequent proteasomal degradation. This chain is V-type proton ATPase subunit G 1 (ATP6V1G1), found in Pan troglodytes (Chimpanzee).